The chain runs to 1016 residues: Enhancer of polycomb-like protein 1 (1016 aa).

Disordered regions lie at residues 1-50, 96-119, 450-488, 499-518, and 842-1016; these read MAIH…NDLE, LLGS…DASV, KEED…TIGT, GQVH…VKLP, and ARMR…PNRK. Residues 35-50 show a composition bias toward polar residues; sequence YKQSDLPTLNASNDLE. Basic and acidic residues-rich tracts occupy residues 103 to 116 and 457 to 473; these read DGDK…KKTD and ESSK…DSSR. Positions 475-488 are enriched in polar residues; that stretch reads GSATSMPGSATIGT. The span at 842-883 shows a compositional bias: low complexity; that stretch reads ARMRTLQQQQRNNKQQAAGQSSGSSSASLGSNTNSNSSISGQ. Positions 884–902 are enriched in polar residues; the sequence is ADQGQTNLTNSGITRQGGA. Positions 904–923 are enriched in low complexity; sequence VNGSQTSTTNNTRSSVSGGS. A compositionally biased stretch (polar residues) spans 928–956; sequence LPTQSSQRSNTNSPLLASQPQGYSQQQKF. Residues 960-971 are compositionally biased toward low complexity; that stretch reads PPTSQSQSQSPT. A compositionally biased stretch (polar residues) spans 976-994; sequence QLQTSKMYNKHGSNITPSN.

It belongs to the enhancer of polycomb family. In terms of assembly, component of the NuA4 histone acetyltransferase complex.

The protein localises to the nucleus. Functionally, component of the NuA4 histone acetyltransferase complex which is involved in transcriptional activation of selected genes principally by acetylation of nucleosomal histone H4 and H2A. The NuA4 complex is also involved in DNA repair. Involved in gene silencing by neighboring heterochromatin, blockage of the silencing spreading along the chromosome, and required for cell cycle progression through G2/M. The protein is Enhancer of polycomb-like protein 1 (EPL1) of Debaryomyces hansenii (strain ATCC 36239 / CBS 767 / BCRC 21394 / JCM 1990 / NBRC 0083 / IGC 2968) (Yeast).